The following is a 214-amino-acid chain: Adenylate kinase (214 aa).

10–15 contributes to the ATP binding site; it reads GVGKGT. An NMP region spans residues 30–59; it reads STGDILRAAVKELTPMGAKAKGYMDSGALV. AMP-binding positions include Thr31, Arg36, 57–59, 85–88, and Gln92; these read ALV and GFPR. The tract at residues 126–163 is LID; the sequence is GRRACANCGAGYHVDFAPSKVAGVCDACSGQLVQREDD. Arg127 is an ATP binding site. Cys130, Cys133, Cys150, and Cys153 together coordinate Zn(2+). Residues Arg160 and Arg171 each coordinate AMP. An ATP-binding site is contributed by Gly199.

The protein belongs to the adenylate kinase family. As to quaternary structure, monomer.

It localises to the cytoplasm. The catalysed reaction is AMP + ATP = 2 ADP. The protein operates within purine metabolism; AMP biosynthesis via salvage pathway; AMP from ADP: step 1/1. Functionally, catalyzes the reversible transfer of the terminal phosphate group between ATP and AMP. Plays an important role in cellular energy homeostasis and in adenine nucleotide metabolism. This Citrifermentans bemidjiense (strain ATCC BAA-1014 / DSM 16622 / JCM 12645 / Bem) (Geobacter bemidjiensis) protein is Adenylate kinase.